The chain runs to 1335 residues: Membrane-associated phosphatidylinositol transfer protein 2 (1335 aa).

2 disordered regions span residues 32-51 (ETHGQGSGVEILENRPYTDG) and 262-341 (EEGP…SEEE). The segment covering 275–286 (KDQASGTTSDPG) has biased composition (polar residues). Positions 299–319 (KQWSTSSKSSRSSKRGASPSR) are enriched in low complexity. 4 positions are modified to phosphoserine: serine 334, serine 338, serine 365, and serine 586. Positions 606–657 (HCSGGSGGGGSGGSSLESSRHLSRSNIDIPRSNGTEDSRRQLPRKRSDSSTY) are disordered. Positions 609–618 (GGSGGGGSGG) are enriched in gly residues. Serine 630 bears the Phosphoserine mark. Over residues 639–653 (GTEDSRRQLPRKRSD) the composition is skewed to basic and acidic residues. A phosphoserine mark is found at serine 686, serine 687, and serine 688. Residues 701 to 949 (FDFEIADLFL…VSFLLRQVMR (249 aa)) enclose the DDHD domain. Arginine 814 carries the post-translational modification Omega-N-methylarginine. Residues 861–880 (ALPPPSPTTQGPRARARQVS) are disordered. Serine 1263 is modified (phosphoserine). The tract at residues 1282 to 1313 (TISAQPSGPSHRHDRTQTQMDSEQRGQRSMSV) is disordered. A compositionally biased stretch (polar residues) spans 1298 to 1313 (QTQMDSEQRGQRSMSV).

Belongs to the PtdIns transfer protein family. PI transfer class IIA subfamily. In terms of assembly, interacts with CPNE4 (via VWFA domain). Interacts with PTK2B via its C-terminus. Detected in retina and in the dentate gyrus of the cerebellum.

It is found in the endomembrane system. The protein resides in the cytoplasm. Its subcellular location is the cytoskeleton. Functionally, catalyzes the transfer of phosphatidylinositol and phosphatidylcholine between membranes (in vitro). Binds calcium ions. This is Membrane-associated phosphatidylinositol transfer protein 2 (Pitpnm2) from Mus musculus (Mouse).